Consider the following 497-residue polypeptide: Guanosine-5'-triphosphate,3'-diphosphate pyrophosphatase (497 aa).

The protein belongs to the GppA/Ppx family. GppA subfamily.

The enzyme catalyses guanosine 3'-diphosphate 5'-triphosphate + H2O = guanosine 3',5'-bis(diphosphate) + phosphate + H(+). It participates in purine metabolism; ppGpp biosynthesis; ppGpp from GTP: step 2/2. Its function is as follows. Catalyzes the conversion of pppGpp to ppGpp. Guanosine pentaphosphate (pppGpp) is a cytoplasmic signaling molecule which together with ppGpp controls the 'stringent response', an adaptive process that allows bacteria to respond to amino acid starvation, resulting in the coordinated regulation of numerous cellular activities. The sequence is that of Guanosine-5'-triphosphate,3'-diphosphate pyrophosphatase from Vibrio campbellii (strain ATCC BAA-1116).